Consider the following 329-residue polypeptide: Large ribosomal subunit protein uL3 (329 aa).

The protein belongs to the universal ribosomal protein uL3 family. As to quaternary structure, part of the 50S ribosomal subunit. Forms a cluster with proteins L14 and L24e.

Functionally, one of the primary rRNA binding proteins, it binds directly near the 3'-end of the 23S rRNA, where it nucleates assembly of the 50S subunit. The polypeptide is Large ribosomal subunit protein uL3 (Picrophilus torridus (strain ATCC 700027 / DSM 9790 / JCM 10055 / NBRC 100828 / KAW 2/3)).